The primary structure comprises 221 residues: Ubiquitin-conjugating enzyme E2 S (221 aa).

The region spanning 11-157 (QVLRLVYKEV…AHLLTEIHAM (147 aa)) is the UBC core domain. The active-site Glycyl thioester intermediate is the Cys-95. Residues 158–221 (GGTSGAPQEP…TDKKRALRRL (64 aa)) are disordered. Residues 193–206 (GTGTNNSNISNTNI) are compositionally biased toward low complexity. Positions 208–221 (AKKKTDKKRALRRL) are enriched in basic residues.

The protein belongs to the ubiquitin-conjugating enzyme family.

It carries out the reaction S-ubiquitinyl-[E1 ubiquitin-activating enzyme]-L-cysteine + [E2 ubiquitin-conjugating enzyme]-L-cysteine = [E1 ubiquitin-activating enzyme]-L-cysteine + S-ubiquitinyl-[E2 ubiquitin-conjugating enzyme]-L-cysteine.. It participates in protein modification; protein ubiquitination. Functionally, catalyzes the covalent attachment of ubiquitin to other proteins. Acts as an essential factor of the anaphase promoting complex/cyclosome (APC/C), a cell cycle-regulated ubiquitin ligase that controls progression through mitosis. Acts by specifically elongating 'Lys-11'-linked polyubiquitin chains initiated by the E2 enzyme ube2c/ubch10 on APC/C substrates, enhancing the degradation of APC/C substrates by the proteasome and promoting mitotic exit. The chain is Ubiquitin-conjugating enzyme E2 S (ube2s) from Danio rerio (Zebrafish).